Reading from the N-terminus, the 74-residue chain is Exodeoxyribonuclease 7 small subunit (74 aa).

It belongs to the XseB family. In terms of assembly, heterooligomer composed of large and small subunits.

It is found in the cytoplasm. It carries out the reaction Exonucleolytic cleavage in either 5'- to 3'- or 3'- to 5'-direction to yield nucleoside 5'-phosphates.. Its function is as follows. Bidirectionally degrades single-stranded DNA into large acid-insoluble oligonucleotides, which are then degraded further into small acid-soluble oligonucleotides. The sequence is that of Exodeoxyribonuclease 7 small subunit from Neisseria meningitidis serogroup C / serotype 2a (strain ATCC 700532 / DSM 15464 / FAM18).